We begin with the raw amino-acid sequence, 179 residues long: MQKLKSIYITKVCPILVNEFLYTNFFEIPKINKVVISRGFGESCNSSKILESLLVELKNISGQKPILCKSKNSISNFKVKKGMPIGMFVTLHGDKMYSFLDRLINLSFPRMRDFNGLNIKGFDGFGNYNVGLSEQSIFPEIEYSSILKNKGMNITIVTTAKTDLESFSLLKGLGFPFCV.

The protein belongs to the universal ribosomal protein uL5 family. Part of the 50S ribosomal subunit; contacts the 5S rRNA.

Its subcellular location is the plastid. In terms of biological role, binds 5S rRNA, forms part of the central protuberance of the 50S subunit. The protein is Large ribosomal subunit protein uL5c (rpl5) of Euglena longa (Euglenophycean alga).